The primary structure comprises 162 residues: Peptide deformylase (162 aa).

The Fe cation site is built by Cys-91 and His-133. Glu-134 is a catalytic residue. Residue His-137 participates in Fe cation binding.

It belongs to the polypeptide deformylase family. Fe(2+) is required as a cofactor.

The catalysed reaction is N-terminal N-formyl-L-methionyl-[peptide] + H2O = N-terminal L-methionyl-[peptide] + formate. Functionally, removes the formyl group from the N-terminal Met of newly synthesized proteins. Requires at least a dipeptide for an efficient rate of reaction. N-terminal L-methionine is a prerequisite for activity but the enzyme has broad specificity at other positions. The polypeptide is Peptide deformylase (Finegoldia magna (strain ATCC 29328 / DSM 20472 / WAL 2508) (Peptostreptococcus magnus)).